The following is a 300-amino-acid chain: 3-dehydrocarnitine:acetyl-CoA trimethylamine transferase (300 aa).

3 residues coordinate Zn(2+): histidine 51, histidine 53, and glutamate 254.

This sequence belongs to the BKACE family. Homotetramer. Zn(2+) serves as cofactor.

It catalyses the reaction 3-dehydrocarnitine + acetyl-CoA = N,N,N-trimethylglycyl-CoA + acetoacetate. It participates in amine and polyamine metabolism; carnitine metabolism. Catalyzes the condensation of dehydrocarnitine and acetyl-CoA, forming acetoacetate and betainyl-CoA (N,N,N-trimethylglycyl-CoA). Is involved in a L-carnitine degradation pathway that allows R.meliloti to grow on L-carnitine as the sole source of carbon and nitrogen. This is 3-dehydrocarnitine:acetyl-CoA trimethylamine transferase from Rhizobium meliloti (strain 1021) (Ensifer meliloti).